The chain runs to 605 residues: MNSVPNDLQTWKRFVKDGVLDEARLRKRIAESWHRCKKAEVNPYLEKGPKVLQQTELDQQSKKHSFFLTTAKPYLEKLLPAIKEMEMMALLIDSDGVVLALDGHPRALYEAKRINFVEGACWTETAVGTNAIGTALHISEPVAIQGSEHYSIASHLWNCSAAPIHHEDGSLAGVIDISCPAAGAHPHMLGIATAIAYAAERELAAKSREKELELISRFGERAASSVPMVLCNTKQHIISASMPIRTSMPDWQGRHLYELKERGYSIENAVTIGDGGTCFYLSEQKKKKAFRFNGVIGQSGRSQAMLMHLERAAATDASVCLSGETGTGKEVAARALHENSERRHGPFVAVNCGAIPSDLIESELFGYAEGAFTGAKRNGYKGAFQKANQGTLFLDEIGEISHSMQVALLRVLQERKITPIGGTKEIPVDIRVIAATHCDLRELAENGKIREDLFYRLHVYPIELPPLRDRTEDIPDLFEYYKQKNHWPGDLPSDFCNVLKQWKWPGNIRELFNVFERLSIRFPDGRLRDESLPALLEAAGLPASSAEKKPAAAGVLTFREQIQKDMMIKALESAKGNVSQAAKISGIPRSTFYKRLKKFNLSAES.

One can recognise a Sigma-54 factor interaction domain in the interval 295–520 (VIGQSGRSQA…LFNVFERLSI (226 aa)). ATP contacts are provided by residues 323–330 (GETGTGKE) and 387–396 (ANQGTLFLDE). A DNA-binding region (H-T-H motif) is located at residues 578–597 (VSQAAKISGIPRSTFYKRLK).

Acts as a transcriptional activator of the acoABCL operon encoding the acetoin dehydrogenase complex. This is Acetoin dehydrogenase operon transcriptional activator AcoR (acoR) from Bacillus subtilis (strain 168).